The following is a 191-amino-acid chain: Iron-sulfur flavoprotein (191 aa).

Cys-47, Cys-50, Cys-53, and Cys-59 together coordinate [4Fe-4S] cluster.

Belongs to the SsuE family. Isf subfamily. In terms of assembly, homodimer. FMN serves as cofactor. It depends on [4Fe-4S] cluster as a cofactor.

Its function is as follows. Redox-active protein probably involved in electron transport during fermentation of acetate to methane. In Methanosarcina thermophila, this protein is Iron-sulfur flavoprotein (isf).